The sequence spans 340 residues: GTP 3',8-cyclase (340 aa).

The Radical SAM core domain maps to 8–227 (KLGRPIRDLR…EMIEQNFDIE (220 aa)). Position 17 (Arg17) interacts with GTP. [4Fe-4S] cluster-binding residues include Cys24 and Cys28. Tyr30 provides a ligand contact to S-adenosyl-L-methionine. Cys31 contributes to the [4Fe-4S] cluster binding site. Arg71 contributes to the GTP binding site. Gly75 lines the S-adenosyl-L-methionine pocket. Thr102 contributes to the GTP binding site. Ser126 contributes to the S-adenosyl-L-methionine binding site. GTP is bound at residue Lys163. S-adenosyl-L-methionine is bound at residue Met197. [4Fe-4S] cluster-binding residues include Cys261 and Cys264. Residue 266–268 (RAR) participates in GTP binding. Position 278 (Cys278) interacts with [4Fe-4S] cluster.

This sequence belongs to the radical SAM superfamily. MoaA family. In terms of assembly, monomer and homodimer. It depends on [4Fe-4S] cluster as a cofactor.

It catalyses the reaction GTP + AH2 + S-adenosyl-L-methionine = (8S)-3',8-cyclo-7,8-dihydroguanosine 5'-triphosphate + 5'-deoxyadenosine + L-methionine + A + H(+). It functions in the pathway cofactor biosynthesis; molybdopterin biosynthesis. Functionally, catalyzes the cyclization of GTP to (8S)-3',8-cyclo-7,8-dihydroguanosine 5'-triphosphate. This is GTP 3',8-cyclase from Staphylococcus saprophyticus subsp. saprophyticus (strain ATCC 15305 / DSM 20229 / NCIMB 8711 / NCTC 7292 / S-41).